A 297-amino-acid chain; its full sequence is Probable terminal-alkyne amino-acid exporter (297 aa).

Helical transmembrane passes span 6–26 (AVWALVLTVVTWASAFPAIRV), 32–52 (GVAGLSLSRLTVASVALAIAA), 65–85 (LPMIALCGATGMSAYQVLLNW), 95–115 (ASLLIAIAPVFSVLLAAVFLG), 123–143 (IAGSAVAISGAAVIAVAGGHA), 150–170 (WVVLAAAVVQGVYHFATKPLL), 178–198 (VACYAMWAGTVFLLPLLPAMV), 212–232 (TVYLGLLPSAIGFVSWGYAVA), and 249–269 (VALVVAFVWLGEVPPPLALVG). EamA domains lie at 6-137 (AVWA…AVIA) and 150-281 (WVVL…MLIN).

This sequence belongs to the EamA transporter family.

It localises to the cell membrane. In terms of biological role, probably involved in the export of terminal alkyne-containing amino acids, namely L-propargylglycine (Pra) and L-beta-ethynylserine, that are antibiotics synthesized by enzymes encoded in the same gene cluster. In Streptantibioticus cattleyicolor (strain ATCC 35852 / DSM 46488 / JCM 4925 / NBRC 14057 / NRRL 8057) (Streptomyces cattleya), this protein is Probable terminal-alkyne amino-acid exporter.